The primary structure comprises 398 residues: 1-deoxy-D-xylulose 5-phosphate reductoisomerase (398 aa).

NADPH is bound by residues T11, G12, S13, I14, R38, N39, and N125. K126 provides a ligand contact to 1-deoxy-D-xylulose 5-phosphate. E127 lines the NADPH pocket. Mn(2+) is bound at residue D151. The 1-deoxy-D-xylulose 5-phosphate site is built by S152, E153, S179, and H202. E153 serves as a coordination point for Mn(2+). G208 contacts NADPH. Residues S215, N220, K221, and E224 each coordinate 1-deoxy-D-xylulose 5-phosphate. Residue E224 participates in Mn(2+) binding.

This sequence belongs to the DXR family. Mg(2+) serves as cofactor. It depends on Mn(2+) as a cofactor.

The catalysed reaction is 2-C-methyl-D-erythritol 4-phosphate + NADP(+) = 1-deoxy-D-xylulose 5-phosphate + NADPH + H(+). It functions in the pathway isoprenoid biosynthesis; isopentenyl diphosphate biosynthesis via DXP pathway; isopentenyl diphosphate from 1-deoxy-D-xylulose 5-phosphate: step 1/6. In terms of biological role, catalyzes the NADPH-dependent rearrangement and reduction of 1-deoxy-D-xylulose-5-phosphate (DXP) to 2-C-methyl-D-erythritol 4-phosphate (MEP). This chain is 1-deoxy-D-xylulose 5-phosphate reductoisomerase, found in Burkholderia cenocepacia (strain HI2424).